The following is a 126-amino-acid chain: MAKGYYVKFETPKDLVNPILEALRAATQSGKVKKGTNEATKAIERGTSKLVVIAEDVEPPEVVAHLPILCDEQGAAYAFVPSKQDLGKALGIDITSAAAILDSGDAQHIVDQVISSIAKIKGETGK.

This sequence belongs to the eukaryotic ribosomal protein eL8 family. In terms of assembly, part of the 50S ribosomal subunit. Probably part of the RNase P complex.

The protein localises to the cytoplasm. Functionally, multifunctional RNA-binding protein that recognizes the K-turn motif in ribosomal RNA, the RNA component of RNase P, box H/ACA, box C/D and box C'/D' sRNAs. This Cenarchaeum symbiosum (strain A) protein is Large ribosomal subunit protein eL8.